The chain runs to 351 residues: Probable dual-specificity RNA methyltransferase RlmN (351 aa).

E102 (proton acceptor) is an active-site residue. The region spanning 110–339 is the Radical SAM core domain; it reads DGGRKTICIS…ILNRRSPGKD (230 aa). Cysteines 117 and 344 form a disulfide. Residues C124, C128, and C131 each coordinate [4Fe-4S] cluster. Residues 171 to 172, S203, 226 to 228, and N302 contribute to the S-adenosyl-L-methionine site; these read GE and SLN. C344 functions as the S-methylcysteine intermediate in the catalytic mechanism.

It belongs to the radical SAM superfamily. RlmN family. [4Fe-4S] cluster serves as cofactor.

The protein localises to the cytoplasm. It carries out the reaction adenosine(2503) in 23S rRNA + 2 reduced [2Fe-2S]-[ferredoxin] + 2 S-adenosyl-L-methionine = 2-methyladenosine(2503) in 23S rRNA + 5'-deoxyadenosine + L-methionine + 2 oxidized [2Fe-2S]-[ferredoxin] + S-adenosyl-L-homocysteine. The enzyme catalyses adenosine(37) in tRNA + 2 reduced [2Fe-2S]-[ferredoxin] + 2 S-adenosyl-L-methionine = 2-methyladenosine(37) in tRNA + 5'-deoxyadenosine + L-methionine + 2 oxidized [2Fe-2S]-[ferredoxin] + S-adenosyl-L-homocysteine. Specifically methylates position 2 of adenine 2503 in 23S rRNA and position 2 of adenine 37 in tRNAs. This Leptospira borgpetersenii serovar Hardjo-bovis (strain JB197) protein is Probable dual-specificity RNA methyltransferase RlmN.